Consider the following 255-residue polypeptide: Triosephosphate isomerase (255 aa).

9-11 (NWK) contributes to the substrate binding site. Catalysis depends on H95, which acts as the Electrophile. Residue E167 is the Proton acceptor of the active site. Residues G173, S212, and 233–234 (GG) each bind substrate.

The protein belongs to the triosephosphate isomerase family. In terms of assembly, homodimer.

It localises to the cytoplasm. It catalyses the reaction D-glyceraldehyde 3-phosphate = dihydroxyacetone phosphate. It functions in the pathway carbohydrate biosynthesis; gluconeogenesis. Its pathway is carbohydrate degradation; glycolysis; D-glyceraldehyde 3-phosphate from glycerone phosphate: step 1/1. Functionally, involved in the gluconeogenesis. Catalyzes stereospecifically the conversion of dihydroxyacetone phosphate (DHAP) to D-glyceraldehyde-3-phosphate (G3P). The protein is Triosephosphate isomerase of Pectobacterium atrosepticum (strain SCRI 1043 / ATCC BAA-672) (Erwinia carotovora subsp. atroseptica).